The following is a 416-amino-acid chain: Actin-like protein 9 (416 aa).

The disordered stretch occupies residues 1–23 (MDPNQGNPLEPQDSPEIPKPSLN).

This sequence belongs to the actin family. In terms of assembly, interacts with ACTL7A.

The protein resides in the cytoplasmic vesicle. Its subcellular location is the secretory vesicle. The protein localises to the acrosome. It localises to the cytoplasm. It is found in the cytoskeleton. The protein resides in the perinuclear theca. Testis-specic protein that plays an important role in fusion of proacrosomal vesicles and perinuclear theca formation. This Bos taurus (Bovine) protein is Actin-like protein 9 (ACTL9).